The sequence spans 66 residues: U10-theraphotoxin-Cg1a 2 (66 aa).

Residues 1 to 21 (MKTSVLFVIFGLALLLCLSFA) form the signal peptide. Residues 22-29 (AELEDTGR) constitute a propeptide that is removed on maturation. 3 disulfides stabilise this stretch: Cys31–Cys46, Cys38–Cys51, and Cys45–Cys58.

This sequence belongs to the neurotoxin 10 (Hwtx-1) family. 29 (Jztx-13) subfamily. Expressed by the venom gland.

It localises to the secreted. Its function is as follows. Probable ion channel inhibitor. The sequence is that of U10-theraphotoxin-Cg1a 2 from Chilobrachys guangxiensis (Chinese earth tiger tarantula).